A 787-amino-acid chain; its full sequence is Aconitate hydratase, mitochondrial (787 aa).

The N-terminal 33 residues, 1–33 (MISTRLARAGALAPKSRLFLGTRAFATVGDSPL), are a transit peptide targeting the mitochondrion. Substrate contacts are provided by residues glutamine 104 and 197–199 (DSH). Residues cysteine 390, cysteine 453, and cysteine 456 each coordinate [4Fe-4S] cluster. Arginine 479 and arginine 484 together coordinate substrate. Residues 529 to 559 (LQPPTGEGLPAKGYDPGRDTYQAPPADRSSV) form a disordered region. Residues arginine 612 and 675–676 (SR) each bind substrate.

The protein belongs to the aconitase/IPM isomerase family. [4Fe-4S] cluster is required as a cofactor.

The protein resides in the mitochondrion. The enzyme catalyses citrate = D-threo-isocitrate. It catalyses the reaction (2R)-homocitrate = cis-homoaconitate + H2O. The protein operates within carbohydrate metabolism; tricarboxylic acid cycle; isocitrate from oxaloacetate: step 2/2. It functions in the pathway amino-acid biosynthesis; L-lysine biosynthesis via AAA pathway; L-alpha-aminoadipate from 2-oxoglutarate: step 2/5. In terms of biological role, catalyzes the isomerization of citrate to isocitrate via cis-aconitate, a step in the citric acid cycle. Also catalyzes the reversible dehydration of (R)-homocitrate to cis-homoaconitate, a step in the alpha-aminoadipate pathway for lysine biosynthesis. In Aspergillus fumigatus (strain ATCC MYA-4609 / CBS 101355 / FGSC A1100 / Af293) (Neosartorya fumigata), this protein is Aconitate hydratase, mitochondrial (acoA).